The following is a 460-amino-acid chain: Serine--tRNA ligase (460 aa).

An L-serine-binding site is contributed by T255–E257. Residues R286–E288 and V302 each bind ATP. E309 is an L-serine binding site. ATP is bound at residue E373–S376. T409 provides a ligand contact to L-serine.

The protein belongs to the class-II aminoacyl-tRNA synthetase family. Type-1 seryl-tRNA synthetase subfamily. Homodimer. The tRNA molecule binds across the dimer.

It localises to the cytoplasm. The enzyme catalyses tRNA(Ser) + L-serine + ATP = L-seryl-tRNA(Ser) + AMP + diphosphate + H(+). The catalysed reaction is tRNA(Sec) + L-serine + ATP = L-seryl-tRNA(Sec) + AMP + diphosphate + H(+). It participates in aminoacyl-tRNA biosynthesis; selenocysteinyl-tRNA(Sec) biosynthesis; L-seryl-tRNA(Sec) from L-serine and tRNA(Sec): step 1/1. Functionally, catalyzes the attachment of serine to tRNA(Ser). Is also able to aminoacylate tRNA(Sec) with serine, to form the misacylated tRNA L-seryl-tRNA(Sec), which will be further converted into selenocysteinyl-tRNA(Sec). The chain is Serine--tRNA ligase from Hyperthermus butylicus (strain DSM 5456 / JCM 9403 / PLM1-5).